The sequence spans 498 residues: ATP synthase subunit beta, chloroplastic (498 aa).

ATP is bound at residue 172-179 (GGAGVGKT).

It belongs to the ATPase alpha/beta chains family. In terms of assembly, F-type ATPases have 2 components, CF(1) - the catalytic core - and CF(0) - the membrane proton channel. CF(1) has five subunits: alpha(3), beta(3), gamma(1), delta(1), epsilon(1). CF(0) has four main subunits: a(1), b(1), b'(1) and c(9-12).

It localises to the plastid. It is found in the chloroplast thylakoid membrane. The catalysed reaction is ATP + H2O + 4 H(+)(in) = ADP + phosphate + 5 H(+)(out). In terms of biological role, produces ATP from ADP in the presence of a proton gradient across the membrane. The catalytic sites are hosted primarily by the beta subunits. The chain is ATP synthase subunit beta, chloroplastic from Solanum bulbocastanum (Wild potato).